The chain runs to 179 residues: Large ribosomal subunit protein uL5 (179 aa).

The protein belongs to the universal ribosomal protein uL5 family. As to quaternary structure, part of the 50S ribosomal subunit; contacts the 5S rRNA and probably tRNA. Forms a bridge to the 30S subunit in the 70S ribosome.

In terms of biological role, this is one of the proteins that bind and probably mediate the attachment of the 5S RNA into the large ribosomal subunit, where it forms part of the central protuberance. In the 70S ribosome it contacts protein S13 of the 30S subunit (bridge B1b), connecting the 2 subunits; this bridge is implicated in subunit movement. May contact the P site tRNA; the 5S rRNA and some of its associated proteins might help stabilize positioning of ribosome-bound tRNAs. This is Large ribosomal subunit protein uL5 from Pyrobaculum aerophilum (strain ATCC 51768 / DSM 7523 / JCM 9630 / CIP 104966 / NBRC 100827 / IM2).